The following is a 427-amino-acid chain: Gustatory receptor for sugar taste 43a (427 aa).

At 1–37 (MEISQPSIGIFYISKVLALAPYATVRNSKGRVEIGRS) the chain is on the cytoplasmic side. The chain crosses the membrane as a helical span at residues 38–63 (WLFTVYSATLTVVMVFLTYRGLLFDA). Residues 64-75 (NSEIPVRMKSAT) are Extracellular-facing. Residues Arg70 and Asp83 each coordinate beta-D-fructose. The helical transmembrane segment at 76 to 96 (SKVVTALDVSVVVMAIVSGVY) threads the bilayer. The Cytoplasmic portion of the chain corresponds to 97–135 (CGLFSLNDTLELNDRLNKIDNTLNAYNNFRRDRWRALGM). A helical transmembrane segment spans residues 136 to 158 (AAVSLLAISILVGLDVGTWMRIA). Residues 159-168 (QDMNIAQSDT) are Extracellular-facing. The chain crosses the membrane as a helical span at residues 169 to 193 (ELNVHWYIPFYSLYFILTGLQVNIA). Tyr182 contacts beta-D-fructose. Residues 194–293 (NTAYGLGRRF…CVHLLSNSFG (100 aa)) are Cytoplasmic-facing. The chain crosses the membrane as a helical span at residues 294–316 (IAVLFILVSCLLHLVATAYFLFL). Thr310 lines the beta-D-fructose pocket. The Extracellular portion of the chain corresponds to 317–324 (ELLSKRDN). A helical membrane pass occupies residues 325 to 346 (GYLWVQMLWICFHFLRLLMVVE). Beta-D-fructose is bound at residue His337. The Cytoplasmic segment spans residues 347–402 (PCHLAARESRKTIQIVCEIERKVHEPILAEAVKKFWQQLLVVDADFSACGLCRVNR). Residues 403 to 423 (TILTSFASAIATYLVILIQFQ) traverse the membrane as a helical segment. Gln421 provides a ligand contact to Ca(2+). Residues 424–427 (RTNG) are Extracellular-facing.

This sequence belongs to the insect chemoreceptor superfamily. Gustatory receptor (GR) family. Gr21a subfamily. In terms of assembly, homotetramer. Expressed in the adult labellar chemosensory neurons and in the adult head, abdomen, leg and wing. In larvae, is expressed in taste organs, as well as the brain and the gastrointestinal system.

The protein localises to the cell membrane. Its function is as follows. Gustatory receptor which mediates acceptance or avoidance behavior, depending on its substrates. Gr43a is the main sugar receptor in larvae. Functions as a narrowly tuned fructose receptor in taste neurons but also as a fructose receptor in the brain. Necessary and sufficient to sense hemolymph fructose and promote feeding in hungry flies but suppress feeding in satiated flies. The protein is Gustatory receptor for sugar taste 43a (Gr43a) of Drosophila melanogaster (Fruit fly).